The primary structure comprises 1070 residues: DNA-directed RNA polymerase subunit beta (1070 aa).

Belongs to the RNA polymerase beta chain family. As to quaternary structure, in plastids the minimal PEP RNA polymerase catalytic core is composed of four subunits: alpha, beta, beta', and beta''. When a (nuclear-encoded) sigma factor is associated with the core the holoenzyme is formed, which can initiate transcription.

The protein localises to the plastid. It localises to the chloroplast. It carries out the reaction RNA(n) + a ribonucleoside 5'-triphosphate = RNA(n+1) + diphosphate. In terms of biological role, DNA-dependent RNA polymerase catalyzes the transcription of DNA into RNA using the four ribonucleoside triphosphates as substrates. The polypeptide is DNA-directed RNA polymerase subunit beta (Illicium oligandrum (Star anise)).